We begin with the raw amino-acid sequence, 160 residues long: Ureidoglycolate lyase (160 aa).

The protein belongs to the ureidoglycolate lyase family. As to quaternary structure, homodimer. Ni(2+) is required as a cofactor.

It carries out the reaction (S)-ureidoglycolate = urea + glyoxylate. It functions in the pathway nitrogen metabolism; (S)-allantoin degradation. Catalyzes the catabolism of the allantoin degradation intermediate (S)-ureidoglycolate, generating urea and glyoxylate. Involved in the anaerobic utilization of allantoin as sole nitrogen source. Reinforces the induction of genes involved in the degradation of allantoin and glyoxylate by producing glyoxylate. This Shigella flexneri serotype 5b (strain 8401) protein is Ureidoglycolate lyase.